Here is a 416-residue protein sequence, read N- to C-terminus: uncharacterized protein (416 aa).

4 residues coordinate [4Fe-4S] cluster: Cys-63, Cys-75, Cys-78, and Cys-152. S-adenosyl-L-methionine is bound by residues Gln-253, Phe-280, Glu-300, and Asp-348. Residue Cys-374 is the Nucleophile of the active site.

Belongs to the class I-like SAM-binding methyltransferase superfamily. RNA M5U methyltransferase family.

This is an uncharacterized protein from Agrobacterium fabrum (strain C58 / ATCC 33970) (Agrobacterium tumefaciens (strain C58)).